A 449-amino-acid polypeptide reads, in one-letter code: POU domain, class 5, transcription factor 1.1 (449 aa).

Disordered stretches follow at residues 79-125 (ENNQ…SPPN) and 170-233 (YPTP…PSES). The span at 97-110 (SRIKVKEEVVHETD) shows a compositional bias: basic and acidic residues. Residues 170-180 (YPTPANQSPNT) show a composition bias toward polar residues. A compositionally biased stretch (low complexity) spans 187–199 (SSMESSRCSSTNS). Over residues 224 to 233 (DNEEEVPSES) the composition is skewed to acidic residues. Residues 227 to 301 (EEVPSESEME…FLERWVVEAE (75 aa)) enclose the POU-specific domain. Residues 321 to 380 (KRKRRTNIENIVKGTLESYFMKCPKPGAQEMVQIAKELNMDKDVVRVWFCNRRQKGKRQG) constitute a DNA-binding region (homeobox).

It belongs to the POU transcription factor family. Class-5 subfamily. Interacts with components of the transcription complex that assembles on the vent2-B gene, including vent2 (via C-terminus), smad1 and smad4. Forms a repression complex on the promoters of the gsc and mix2 genes via interactions with the nodal/activin signaling pathway transducers foxh1/fast1, gtf2ird1/wbscr11 and smad2. Forms a repression complex on the promoters of the nodal/nr1 and siamois genes with the maternal factors tcf7l1/tcf3 and vegt. Highly enriched within the animal half of developing embryos within ectodermal and mesodermal regions. Expressed in the neuroectoderm at the early neurula stage, with expression initially extending to the future hindbrain/midbrain boundary, but later shifting toward the posterior pole where it persists within the tip of the tail in hatching embryos. Expressed at very low levels in the adult kidney.

The protein localises to the nucleus. Its function is as follows. Transcription factor that binds to the octamer motif (5'-ATTTGCAT-3'). Activates transcription when directly bound to the octamer DNA sequence, but can form repression complexes with other proteins at the promoter site to inhibit transcription. Binds to the promoter of the vent2-B gene to activate transcription when in the presence of other BMP signaling factors also bound to the promoter. Inhibits the competence of ectodermal cells to respond to BMP during embryogenesis thereby inhibiting epidermal differentiation and promoting neural induction. Antagonizes the activity of nodal/activin signaling by forming a transcriptional repression complex on the gsc and mix2 gene promoters to inhibit their transcription, and thus maintain the undifferentiated state of embryonic cells to prevent them from differentiating prematurely. Acts maternally to inhibit vegt and beta-catenin-activated gene transcription by forming a transcriptional repression complex on the nodal/nr1 and siamois promoters to inhibit their transcription. The chain is POU domain, class 5, transcription factor 1.1 (pou5f1.1) from Xenopus laevis (African clawed frog).